Reading from the N-terminus, the 169-residue chain is MATLTEDDVLEQLDAQDNLFSFMKTAHSILLQGIRQFLPSLFVDNDEEIVEYAVKPLLAQSGPLDDIDVALRLIYALGKMDKWLYADITHFSQYWHYLNEQDETPGFADDITWDFISNVNSITRNATLYDALKAMKFADFAVWSEARFSGMVKTALTLAVTTTLKELTP.

This sequence belongs to the MtlR/FumE family. Homodimer.

The enzyme catalyses (S)-malate = fumarate + H2O. In vitro catalyzes the addition of water to fumarate, forming malate. Cannot catalyze the reverse reaction. Cannot use the cis-isomer maleate as substrate. This is Fumarase E from Shigella flexneri.